Here is a 165-residue protein sequence, read N- to C-terminus: Cyclic pyranopterin monophosphate synthase (165 aa).

Substrate contacts are provided by residues 78–80 (LCH) and 116–117 (ME). Residue Asp131 is part of the active site.

The protein belongs to the MoaC family. Homohexamer; trimer of dimers.

The catalysed reaction is (8S)-3',8-cyclo-7,8-dihydroguanosine 5'-triphosphate = cyclic pyranopterin phosphate + diphosphate. The protein operates within cofactor biosynthesis; molybdopterin biosynthesis. In terms of biological role, catalyzes the conversion of (8S)-3',8-cyclo-7,8-dihydroguanosine 5'-triphosphate to cyclic pyranopterin monophosphate (cPMP). The polypeptide is Cyclic pyranopterin monophosphate synthase (Sinorhizobium fredii (strain NBRC 101917 / NGR234)).